The chain runs to 542 residues: Chitinase 2 (542 aa).

A signal peptide spans 1-22 (MLTRTFLGMAISAFLASTGVQA). A GH18 domain is found at 29–314 (PNVMYYWGQN…SQLYSLVHSG (286 aa)). Catalysis depends on Glu-166, which acts as the Proton donor. The disordered stretch occupies residues 312–356 (HSGGSTPPPPSSSSATKTTTKTTATSTKTTTTTAPTATSTPGSCP). A compositionally biased stretch (low complexity) spans 323–354 (SSSATKTTTKTTATSTKTTTTTAPTATSTPGS). The chitin-binding, high affinity stretch occupies residues 355-406 (CPVANQPCSTQNQYACTADGKYAVCDHGKWVASSCPSNTVCIPTTDGASIYC). Positions 447–542 (AQLAVTSTDK…APSTSAWNFK (96 aa)) are excised as a propeptide.

The protein belongs to the glycosyl hydrolase 18 family. Chitinase class III subfamily. Monomer. O-glycosylated.

The protein localises to the secreted. The catalysed reaction is Random endo-hydrolysis of N-acetyl-beta-D-glucosaminide (1-&gt;4)-beta-linkages in chitin and chitodextrins.. Its function is as follows. Probably involved in the apical growth and branching of fungal hyphae. The polypeptide is Chitinase 2 (CHI2) (Rhizopus oligosporus (Rhizopus microsporus var. oligosporus)).